We begin with the raw amino-acid sequence, 140 residues long: Putative pre-16S rRNA nuclease (140 aa).

This sequence belongs to the YqgF nuclease family.

The protein resides in the cytoplasm. Its function is as follows. Could be a nuclease involved in processing of the 5'-end of pre-16S rRNA. The polypeptide is Putative pre-16S rRNA nuclease (Yersinia pseudotuberculosis serotype IB (strain PB1/+)).